A 117-amino-acid chain; its full sequence is Large ribosomal subunit protein bL19 (117 aa).

The protein belongs to the bacterial ribosomal protein bL19 family.

This protein is located at the 30S-50S ribosomal subunit interface and may play a role in the structure and function of the aminoacyl-tRNA binding site. This is Large ribosomal subunit protein bL19 from Vibrio campbellii (strain ATCC BAA-1116).